The primary structure comprises 907 residues: Putative ATP-dependent DNA helicase DDX11-like protein 8 (907 aa).

The Helicase ATP-binding domain occupies G9 to L447. Position 44 to 51 (S44 to S51) interacts with ATP. Positions Y202–D222 are disordered. A compositionally biased stretch (basic and acidic residues) spans E206–D217. Phosphoserine is present on S264. Residues C269 and C287 each contribute to the [4Fe-4S] cluster site. Over residues Q291–P306 the composition is skewed to basic and acidic residues. Residues Q291–Q314 form a disordered region. 2 residues coordinate [4Fe-4S] cluster: C317 and C352. The DEAH motif lies at D395 to H398.

It belongs to the DEAD box helicase family. DEAH subfamily. DDX11/CHL1 sub-subfamily. The cofactor is [4Fe-4S] cluster.

It localises to the nucleus. Its subcellular location is the nucleolus. In terms of biological role, putative DNA helicase. The sequence is that of Putative ATP-dependent DNA helicase DDX11-like protein 8 (DDX11L8) from Homo sapiens (Human).